A 67-amino-acid chain; its full sequence is Large ribosomal subunit protein uL29 (67 aa).

Belongs to the universal ribosomal protein uL29 family.

The chain is Large ribosomal subunit protein uL29 from Polaromonas naphthalenivorans (strain CJ2).